A 162-amino-acid chain; its full sequence is Cyclic pyranopterin monophosphate synthase (162 aa).

Residues 75 to 77 and 113 to 114 each bind substrate; these read LCH and ME. Aspartate 128 is an active-site residue.

The protein belongs to the MoaC family. Homohexamer; trimer of dimers.

The catalysed reaction is (8S)-3',8-cyclo-7,8-dihydroguanosine 5'-triphosphate = cyclic pyranopterin phosphate + diphosphate. It functions in the pathway cofactor biosynthesis; molybdopterin biosynthesis. Catalyzes the conversion of (8S)-3',8-cyclo-7,8-dihydroguanosine 5'-triphosphate to cyclic pyranopterin monophosphate (cPMP). This chain is Cyclic pyranopterin monophosphate synthase, found in Xanthobacter autotrophicus (strain ATCC BAA-1158 / Py2).